Here is a 713-residue protein sequence, read N- to C-terminus: Ribosomal RNA large subunit methyltransferase K/L (713 aa).

The 112-residue stretch at 43–154 (LAYRITLWTR…NGVITIAMNF (112 aa)) folds into the THUMP domain.

The protein belongs to the methyltransferase superfamily. RlmKL family.

It localises to the cytoplasm. It catalyses the reaction guanosine(2445) in 23S rRNA + S-adenosyl-L-methionine = N(2)-methylguanosine(2445) in 23S rRNA + S-adenosyl-L-homocysteine + H(+). It carries out the reaction guanosine(2069) in 23S rRNA + S-adenosyl-L-methionine = N(2)-methylguanosine(2069) in 23S rRNA + S-adenosyl-L-homocysteine + H(+). Specifically methylates the guanine in position 2445 (m2G2445) and the guanine in position 2069 (m7G2069) of 23S rRNA. The polypeptide is Ribosomal RNA large subunit methyltransferase K/L (Shewanella sp. (strain MR-7)).